We begin with the raw amino-acid sequence, 171 residues long: MSKKSGLSFLWLSAVAFVVDLLTKYIVVQKFDLYESVNVLPVFNLTYVRNYGAAFSFLADHSGWQQYFFILLALAISGMLVYFLAKNNAEQKIQNSAYALIIGGALANMVDRTYNGFVVDFFDFYWDIYHYPVFNIADIAICIGAGLLALDAFKSEKKKVQDKQVEKCGQK.

3 helical membrane-spanning segments follow: residues S8 to V28, W64 to L84, and S96 to V118. Active-site residues include D120 and D138. A helical transmembrane segment spans residues V133–F153.

This sequence belongs to the peptidase A8 family.

The protein resides in the cell inner membrane. It carries out the reaction Release of signal peptides from bacterial membrane prolipoproteins. Hydrolyzes -Xaa-Yaa-Zaa-|-(S,diacylglyceryl)Cys-, in which Xaa is hydrophobic (preferably Leu), and Yaa (Ala or Ser) and Zaa (Gly or Ala) have small, neutral side chains.. It functions in the pathway protein modification; lipoprotein biosynthesis (signal peptide cleavage). Functionally, this protein specifically catalyzes the removal of signal peptides from prolipoproteins. This chain is Lipoprotein signal peptidase, found in Haemophilus influenzae (strain 86-028NP).